A 100-amino-acid chain; its full sequence is Acylphosphatase (100 aa).

The region spanning 14-100 (RLSAWVHGHV…RGDLTGFEER (87 aa)) is the Acylphosphatase-like domain. Catalysis depends on residues arginine 29 and asparagine 47.

This sequence belongs to the acylphosphatase family.

It catalyses the reaction an acyl phosphate + H2O = a carboxylate + phosphate + H(+). This is Acylphosphatase (acyP) from Nocardia farcinica (strain IFM 10152).